A 79-amino-acid polypeptide reads, in one-letter code: Probable Fe(2+)-trafficking protein (79 aa).

This sequence belongs to the Fe(2+)-trafficking protein family. In terms of assembly, monomer.

Its function is as follows. Could be a mediator in iron transactions between iron acquisition and iron-requiring processes, such as synthesis and/or repair of Fe-S clusters in biosynthetic enzymes. This is Probable Fe(2+)-trafficking protein from Blochmanniella floridana.